We begin with the raw amino-acid sequence, 396 residues long: Putative F-box/kelch-repeat protein At4g11770 (396 aa).

Residues 9–55 (PCNMPYLPDDLLLNILGRVSRLYYPILSLVSKRFRSLVGSLELYKIR) enclose the F-box domain. Kelch repeat units lie at residues 151-197 (YIYM…VLDG), 198-248 (KIYV…YEEK), and 250-296 (YLFG…VFYK).

The chain is Putative F-box/kelch-repeat protein At4g11770 from Arabidopsis thaliana (Mouse-ear cress).